The chain runs to 567 residues: Ribulokinase (567 aa).

Belongs to the ribulokinase family.

The catalysed reaction is D-ribulose + ATP = D-ribulose 5-phosphate + ADP + H(+). It catalyses the reaction L-ribulose + ATP = L-ribulose 5-phosphate + ADP + H(+). Its pathway is carbohydrate degradation; L-arabinose degradation via L-ribulose; D-xylulose 5-phosphate from L-arabinose (bacterial route): step 2/3. In Vibrio parahaemolyticus serotype O3:K6 (strain RIMD 2210633), this protein is Ribulokinase.